The chain runs to 646 residues: FAD-binding monooxygenase prhK (646 aa).

A glycan (N-linked (GlcNAc...) asparagine) is linked at Asn46. Residues 80 to 97 (IIIIGAGFGGLLFAVRLI) traverse the membrane as a helical segment. Residues 119–122 (TWYW), 131–132 (DT), and Tyr137 contribute to the FAD site. Residue 129–131 (MCD) coordinates NADP(+). NADP(+) is bound by residues 275 to 281 (TGATAIQ) and 298 to 299 (RT). 3 N-linked (GlcNAc...) asparagine glycosylation sites follow: Asn429, Asn483, and Asn529.

This sequence belongs to the FAD-binding monooxygenase family. FAD serves as cofactor.

Its subcellular location is the membrane. It catalyses the reaction preaustinoid A + AH2 + O2 = preaustinoid A1 + A + H2O. It functions in the pathway secondary metabolite biosynthesis; terpenoid biosynthesis. In terms of biological role, FAD-binding monooxygenase; part of the gene cluster that mediates the biosynthesis of paraherquonin, a meroterpenoid with a unique, highly congested hexacyclic molecular architecture. The first step of the pathway is the synthesis of 3,5-dimethylorsellinic acid (DMOA) by the polyketide synthase prhL. Synthesis of DMOA is followed by farnesylation by the prenyltransferase prhE, methylesterification by the methyl-transferase prhM, epoxidation of the prenyl chain by the flavin-dependent monooxygenase prhF, and cyclization of the farnesyl moiety by the terpene cyclase prhH, to yield the tetracyclic intermediate, protoaustinoid A. The short chain dehydrogenase prhI then oxidizes the C-3 alcohol group of the terpene cyclase product to transform protoaustinoid A into protoaustinoid B. The FAD-binding monooxygenase prhJ catalyzes the oxidation of protoaustinoid B into preaustinoid A which is further oxidized into preaustinoid A1 by FAD-binding monooxygenase phrK. Finally, prhA leads to berkeleydione via the berkeleyone B intermediate. PrhA is a multifunctional dioxygenase that first desaturates at C5-C6 to form berkeleyone B, followed by rearrangement of the A/B-ring to form the cycloheptadiene moiety in berkeleydione. Berkeleydione serves as the key intermediate for the biosynthesis of paraherquonin as well as many other meroterpenoids. The cytochrome P450 monooxygenases prhB, prhD, and prhN, as well as the isomerase prhC, are probably involved in the late stage of paraherquonin biosynthesis, after the production of berkeleydione. Especially prhC might be a multifunctional enzyme that catalyzes the D-ring expansion via intramolecular methoxy rearrangement, as well as the hydrolysis of the expanded D-ring. The protein is FAD-binding monooxygenase prhK of Penicillium brasilianum.